The primary structure comprises 276 residues: Protein TabB (276 aa).

This sequence belongs to the transferase hexapeptide repeat family. Pyridoxal 5'-phosphate is required as a cofactor.

This is Protein TabB (tabB) from Pseudomonas amygdali pv. tabaci (Pseudomonas syringae pv. tabaci).